The following is a 504-amino-acid chain: Cystathionine beta-synthase (504 aa).

Heme contacts are provided by C12 and H23. An N6-(pyridoxal phosphate)lysine modification is found at K78. Residues N108, 215 to 219 (GTGGT), and S307 contribute to the pyridoxal 5'-phosphate site. CBS domains are found at residues 375 to 434 (LSFD…IVKC) and 442 to 498 (MVKQ…NGTS).

This sequence belongs to the cysteine synthase/cystathionine beta-synthase family. Homodimer. Pyridoxal 5'-phosphate serves as cofactor.

The enzyme catalyses L-homocysteine + L-serine = L,L-cystathionine + H2O. It functions in the pathway amino-acid biosynthesis; L-cysteine biosynthesis; L-cysteine from L-homocysteine and L-serine: step 1/2. With respect to regulation, has no response to S-adenosyl-methionine/AdoMet, unlike mammalian orthologs. Binds non-covalently to a heme group that may control the redox sensitivity of the enzyme. Hydro-lyase catalyzing the first step of the transsulfuration pathway, where the hydroxyl group of L-serine is displaced by L-homocysteine in a beta-replacement reaction to form L-cystathionine, the precursor of L-cysteine. This chain is Cystathionine beta-synthase, found in Apis mellifera (Honeybee).